A 113-amino-acid chain; its full sequence is UPF0482 protein YnfB (113 aa).

An N-terminal signal peptide occupies residues Met-1–Ala-28.

Belongs to the UPF0482 family.

The protein is UPF0482 protein YnfB of Shigella dysenteriae serotype 1 (strain Sd197).